The chain runs to 54 residues: Low temperature-induced protein lt101.2 (54 aa).

2 helical membrane-spanning segments follow: residues 2 to 22 and 34 to 54; these read ASAT…GVFL and LLLT…VLVA.

This sequence belongs to the UPF0057 (PMP3) family.

Its subcellular location is the membrane. The polypeptide is Low temperature-induced protein lt101.2 (LT101.2) (Hordeum vulgare (Barley)).